The following is a 97-amino-acid chain: F-actin-capping protein subunit beta (97 aa).

Disordered stretches follow at residues 1 to 27 and 43 to 66; these read RLPP…AMPS and KSGS…ETVS. Positions 43–57 are enriched in polar residues; sequence KSGSGTMNLGGSLTR. Lysine 97 is modified (N6-acetyllysine).

It belongs to the F-actin-capping protein beta subunit family. Component of the F-actin capping complex, composed of a heterodimer of an alpha and a beta subunit. Subunit of dynactin, a multiprotein complex part of a tripartite complex with dynein and a adapter, such as BICDL1, BICD2 or HOOK3. The dynactin complex is built around ACTR1A/ACTB filament and consists of an actin-related filament composed of a shoulder domain, a pointed end and a barbed end. Its length is defined by its flexible shoulder domain. The soulder is composed of 2 DCTN1 subunits, 4 DCTN2 and 2 DCTN3. The 4 DCNT2 (via N-terminus) bind the ACTR1A filament and act as molecular rulers to determine the length. The pointed end is important for binding dynein-dynactin cargo adapters. Consists of 4 subunits: ACTR10, DCNT4, DCTN5 and DCTN6. The barbed end is composed of a CAPZA1:CAPZB heterodimers, which binds ACTR1A/ACTB filament and dynactin and stabilizes dynactin. Interacts with ARHGAP17. Interaction with RCSD1/CAPZIP. Component of the WASH complex, composed of F-actin-capping protein subunit alpha (CAPZA1, CAPZA2 or CAPZA3), F-actin-capping protein subunit beta (CAPZB), WASH (WASHC1, WASH2P, WASH3P, WASH4P, WASH5P or WASH6P), WASHC2 (WASHC2A or WASHC2C), WASHC3, WASHC4 and WASHC5. Interacts with ACTG1. Directly interacts with CRACD; this interaction decreases binding to actin.

The protein localises to the cytoplasm. It is found in the cytoskeleton. The protein resides in the myofibril. It localises to the sarcomere. In terms of biological role, F-actin-capping proteins bind in a Ca(2+)-independent manner to the fast growing ends of actin filaments (barbed end) thereby blocking the exchange of subunits at these ends. Unlike other capping proteins (such as gelsolin and severin), these proteins do not sever actin filaments. Plays a role in the regulation of cell morphology and cytoskeletal organization. Forms, with CAPZB, the barbed end of the fast growing ends of actin filaments in the dynactin complex and stabilizes dynactin structure. The dynactin multiprotein complex activates the molecular motor dynein for ultra-processive transport along microtubules. In Mesocricetus auratus (Golden hamster), this protein is F-actin-capping protein subunit beta.